Here is a 237-residue protein sequence, read N- to C-terminus: Type III pantothenate kinase (237 aa).

6–13 (DAGNSRVK) is an ATP binding site. Substrate-binding positions include Y86 and 93 to 96 (GADR). The Proton acceptor role is filled by D95. T118 contacts ATP. Position 168 (T168) interacts with substrate.

Belongs to the type III pantothenate kinase family. In terms of assembly, homodimer. NH4(+) is required as a cofactor. Requires K(+) as cofactor.

The protein resides in the cytoplasm. It catalyses the reaction (R)-pantothenate + ATP = (R)-4'-phosphopantothenate + ADP + H(+). It participates in cofactor biosynthesis; coenzyme A biosynthesis; CoA from (R)-pantothenate: step 1/5. In terms of biological role, catalyzes the phosphorylation of pantothenate (Pan), the first step in CoA biosynthesis. This Chromobacterium violaceum (strain ATCC 12472 / DSM 30191 / JCM 1249 / CCUG 213 / NBRC 12614 / NCIMB 9131 / NCTC 9757 / MK) protein is Type III pantothenate kinase.